Consider the following 205-residue polypeptide: Small ribosomal subunit protein bS16 (205 aa).

Residues 110-205 form a disordered region; that stretch reads GEEVKIAVGT…ADDNEEPEDE (96 aa). Basic and acidic residues predominate over residues 123 to 132; sequence DPLERERERA. Residues 153 to 205 are compositionally biased toward acidic residues; that stretch reads EETEAEEAEDVETADAEDADAASETDEPEAAADEADETDASADADDNEEPEDE.

It belongs to the bacterial ribosomal protein bS16 family.

The sequence is that of Small ribosomal subunit protein bS16 from Salinibacter ruber (strain DSM 13855 / M31).